The primary structure comprises 238 residues: Sugar fermentation stimulation protein homolog (238 aa).

It belongs to the SfsA family.

This Klebsiella pneumoniae subsp. pneumoniae (strain ATCC 700721 / MGH 78578) protein is Sugar fermentation stimulation protein homolog.